A 370-amino-acid chain; its full sequence is Death-associated protein kinase 2 (370 aa).

The region spanning 23 to 285 is the Protein kinase domain; it reads YDIGEELGSG…IQEALRHPWI (263 aa). ATP is bound by residues 29–37 and lysine 52; that span reads LGSGQFAIV. Catalysis depends on aspartate 149, which acts as the Proton acceptor. The interval 287 to 354 is calmodulin-binding; it reads PVDTQQAMVR…RNCESDTEEN (68 aa). Residues 292–301 are autoinhibitory domain; that stretch reads QAMVRRESVV. A Phosphoserine modification is found at serine 299. Serine 318 carries the phosphoserine; by autocatalysis modification. Position 349 is a phosphoserine (serine 349). Threonine 369 carries the post-translational modification Phosphothreonine.

The protein belongs to the protein kinase superfamily. CAMK Ser/Thr protein kinase family. DAP kinase subfamily. Homodimer in its autoinhibited state. Active as monomer. Interacts with 14-3-3 proteins YWHAB, YWHAE, YWHAG, YWHAH, YWHAQ, YWHAZ and SFN; the interaction requires DAPK2 phosphorylation at Thr-369 and suppresses DAPK2 kinase activity and DAPK2-induced apoptosis. Requires Mg(2+) as cofactor. In terms of processing, autophosphorylation at Ser-318 inhibits its catalytic activity. Dephosphorylated at Ser-318 in response to activated Fas and TNF-alpha receptors. In terms of tissue distribution, expressed in peritubular interstitial cells of the renal cortex. Isoform 1 is found in the adult brain while isoform 2 is expressed in brains of embryos and young mice (at protein level).

The protein resides in the cytoplasm. The protein localises to the cytoplasmic vesicle. Its subcellular location is the autophagosome lumen. The catalysed reaction is L-seryl-[protein] + ATP = O-phospho-L-seryl-[protein] + ADP + H(+). It carries out the reaction L-threonyl-[protein] + ATP = O-phospho-L-threonyl-[protein] + ADP + H(+). Its activity is regulated as follows. Activated by Ca(2+)/calmodulin. Regulated by a double locking mechanism, involving autophosphorylation at Ser-318, calmodulin binding, and dimerization. In the inactive state, Ser-318 is phosphorylated, and the kinase is dimeric. Activation involves: dephosphorylation at Ser-318, release-of-autoinhibition mechanism where calmodulin binding induces a conformational change that relieves the steric block of the active site by the autoinhibitory domain, and generation of the monomeric active form of the kinase. In terms of biological role, calcium/calmodulin-dependent serine/threonine kinase involved in multiple cellular signaling pathways that trigger cell survival, apoptosis, and autophagy. Capable of regulating both type I apoptotic and type II autophagic cell death signals. The former involves caspase activation, chromatin and mitochondrial condensation while the latter involves caspase-independent cell death in conjunction with accumulation of mature autophagic vesicles, plasma membrane blebs, and nuclear condensation without DNA degradation. Mediator of anoikis and a suppressor of beta-catenin-dependent anchorage-independent growth of malignant epithelial cells. May play a role in granulocytic maturation. Regulates granulocytes motility by controlling cell spreading and polarization. The protein is Death-associated protein kinase 2 (Dapk2) of Mus musculus (Mouse).